Here is a 104-residue protein sequence, read N- to C-terminus: Large ribosomal subunit protein uL23 (104 aa).

It belongs to the universal ribosomal protein uL23 family. As to quaternary structure, part of the 50S ribosomal subunit. Contacts protein L29, and trigger factor when it is bound to the ribosome.

One of the early assembly proteins it binds 23S rRNA. One of the proteins that surrounds the polypeptide exit tunnel on the outside of the ribosome. Forms the main docking site for trigger factor binding to the ribosome. This Cupriavidus metallidurans (strain ATCC 43123 / DSM 2839 / NBRC 102507 / CH34) (Ralstonia metallidurans) protein is Large ribosomal subunit protein uL23.